Here is a 115-residue protein sequence, read N- to C-terminus: Putative HNH nuclease YajD (115 aa).

Residues 27 to 75 (CGRCSREFVYSNLRELTVHHIDHDHTNNPEDGSNWELLCLYCHDHEHSK) form the HNH domain.

Belongs to the HNH nuclease family.

The protein is Putative HNH nuclease YajD (yajD) of Escherichia coli O157:H7.